Here is a 78-residue protein sequence, read N- to C-terminus: Major outer membrane lipoprotein Lpp (78 aa).

Residues 1 to 19 (MKAKIVLGAVILASGLLAG) form the signal peptide. C20 carries N-palmitoyl cysteine lipidation. A lipid anchor (S-diacylglycerol cysteine) is attached at C20. 2 repeats span residues 25 to 35 (NAQLDQISSDV) and 39 to 49 (NTQVQQLSSDV). A coiled-coil region spans residues 28–62 (LDQISSDVNRLNTQVQQLSSDVQSANAQAKAAYEA). N6-murein peptidoglycan lysine is present on K78.

Belongs to the Lpp family. In terms of assembly, homotrimer.

The protein localises to the cell outer membrane. It is found in the secreted. The protein resides in the cell wall. In terms of biological role, a highly abundant outer membrane lipoprotein that controls the distance between the inner and outer membranes. The only protein known to be covalently linked to the peptidoglycan network (PGN). Also non-covalently binds the PGN. The link between the cell outer membrane and PGN contributes to maintenance of the structural and functional integrity of the cell envelope, and maintains the correct distance between the PGN and the outer membrane. The sequence is that of Major outer membrane lipoprotein Lpp from Proteus mirabilis.